We begin with the raw amino-acid sequence, 198 residues long: Penicillin-binding protein activator LpoB (198 aa).

The signal sequence occupies residues 1–19 (MIRSVNRTGALMMALILSG). A lipid anchor (N-palmitoyl cysteine) is attached at cysteine 20. Cysteine 20 carries S-diacylglycerol cysteine lipidation. Low complexity predominate over residues 26 to 37 (QPAPVEPTQPVE). Positions 26–59 (QPAPVEPTQPVEPVQPVPQPEQPIPQPQPVPQPP) are disordered. Positions 38–59 (PVQPVPQPEQPIPQPQPVPQPP) are enriched in pro residues.

The protein belongs to the LpoB family. As to quaternary structure, interacts with PBP1b.

Its subcellular location is the cell outer membrane. Functionally, regulator of peptidoglycan synthesis that is essential for the function of penicillin-binding protein 1B (PBP1b). This chain is Penicillin-binding protein activator LpoB, found in Pantoea ananatis (strain LMG 20103).